A 105-amino-acid chain; its full sequence is MVKIVGDLTEFRAELSNAGSKLIVVDFSATWCGPCKMIKPFFHSMVEKYPDVVFIEIDVDDAQDVASHCDVKCMPTFQFYKNNEKVHEFSGANKEKLEEAIKKYM.

One can recognise a Thioredoxin domain in the interval 2 to 105; that stretch reads VKIVGDLTEF…KLEEAIKKYM (104 aa). Residues Cys-32 and Cys-35 each act as nucleophile in the active site. Residues Cys-32 and Cys-35 are joined by a disulfide bond. An S-nitrosocysteine mark is found at Cys-69 and Cys-73.

The protein belongs to the thioredoxin family. Post-translationally, may be nitrosylated on several cysteine residues, depending on the oxidation state. Nitrosylated Cys-73 may serve as donor for nitrosylation of target proteins.

The protein resides in the nucleus. It localises to the cytoplasm. Its subcellular location is the secreted. In terms of biological role, participates in various redox reactions through the reversible oxidation of its active center dithiol to a disulfide and catalyzes dithiol-disulfide exchange reactions. Plays a role in the reversible S-nitrosylation of cysteine residues in target proteins, and thereby contributes to the response to intracellular nitric oxide. Nitrosylates the active site Cys of CASP3 in response to nitric oxide (NO), and thereby inhibits caspase-3 activity. Induces the FOS/JUN AP-1 DNA binding activity in ionizing radiation (IR) cells through its oxidation/reduction status and stimulates AP-1 transcriptional activity. This Ophiophagus hannah (King cobra) protein is Thioredoxin (TXN).